A 530-amino-acid polypeptide reads, in one-letter code: 5-aminolevulinate synthase, mitochondrial (530 aa).

A mitochondrion-targeting transit peptide spans 1-26; sequence MFRPVLKVRPSFSYPYSIVSSRSVRL. R73, S186, and K205 together coordinate substrate. Pyridoxal 5'-phosphate is bound by residues S238, H266, and T316. K319 is a catalytic residue. Position 319 is an N6-(pyridoxal phosphate)lysine (K319). Pyridoxal 5'-phosphate contacts are provided by T348 and T349. Residue T434 coordinates substrate.

It belongs to the class-II pyridoxal-phosphate-dependent aminotransferase family. As to quaternary structure, homodimer. Requires pyridoxal 5'-phosphate as cofactor.

It localises to the mitochondrion matrix. It catalyses the reaction succinyl-CoA + glycine + H(+) = 5-aminolevulinate + CO2 + CoA. It functions in the pathway porphyrin-containing compound metabolism; protoporphyrin-IX biosynthesis; 5-aminolevulinate from glycine: step 1/1. In terms of biological role, catalyzes the synthesis of 5-aminolevulinate (ALA) from succinyl-CoA and glycine, the first and rate-limiting step in heme biosynthesis. This chain is 5-aminolevulinate synthase, mitochondrial (HEM1), found in Candida glabrata (strain ATCC 2001 / BCRC 20586 / JCM 3761 / NBRC 0622 / NRRL Y-65 / CBS 138) (Yeast).